We begin with the raw amino-acid sequence, 119 residues long: Large ribosomal subunit protein bL20 (119 aa).

It belongs to the bacterial ribosomal protein bL20 family.

In terms of biological role, binds directly to 23S ribosomal RNA and is necessary for the in vitro assembly process of the 50S ribosomal subunit. It is not involved in the protein synthesizing functions of that subunit. This is Large ribosomal subunit protein bL20 from Nitrobacter hamburgensis (strain DSM 10229 / NCIMB 13809 / X14).